Reading from the N-terminus, the 156-residue chain is MSLLIDFIDETEEVKEEYMSLIREVLEKAAQMESIEDGAEVSVTFVDNERIREINRDYRDKDQPTDVISFAMEEMGEGEMEIVGAEMPRMLGDLIISIPRAKEQAEEYGHSFDRELGFLALHGFLHLLGYDHMTEEDEKEMFGRQKEILEAFGLGR.

Zn(2+) contacts are provided by His-122, His-126, and His-132.

This sequence belongs to the endoribonuclease YbeY family. Zn(2+) is required as a cofactor.

The protein resides in the cytoplasm. In terms of biological role, single strand-specific metallo-endoribonuclease involved in late-stage 70S ribosome quality control and in maturation of the 3' terminus of the 16S rRNA. The chain is Endoribonuclease YbeY from Bacillus cereus (strain B4264).